The chain runs to 358 residues: Peptide chain release factor 1 (358 aa).

Q234 carries the N5-methylglutamine modification.

This sequence belongs to the prokaryotic/mitochondrial release factor family. Methylated by PrmC. Methylation increases the termination efficiency of RF1.

It is found in the cytoplasm. Its function is as follows. Peptide chain release factor 1 directs the termination of translation in response to the peptide chain termination codons UAG and UAA. In Akkermansia muciniphila (strain ATCC BAA-835 / DSM 22959 / JCM 33894 / BCRC 81048 / CCUG 64013 / CIP 107961 / Muc), this protein is Peptide chain release factor 1.